The sequence spans 444 residues: Jacalin-related lectin 42 (444 aa).

Alanine 2 carries the N-acetylalanine modification. Jacalin-type lectin domains follow at residues alanine 2–arginine 143, alanine 146–proline 289, and threonine 297–proline 441.

It belongs to the jacalin lectin family.

The chain is Jacalin-related lectin 42 (JAL42) from Arabidopsis thaliana (Mouse-ear cress).